We begin with the raw amino-acid sequence, 308 residues long: tRNA dimethylallyltransferase (308 aa).

8-15 (GPTGTGKS) contributes to the ATP binding site. 10 to 15 (TGTGKS) provides a ligand contact to substrate.

This sequence belongs to the IPP transferase family. In terms of assembly, monomer. Mg(2+) serves as cofactor.

It carries out the reaction adenosine(37) in tRNA + dimethylallyl diphosphate = N(6)-dimethylallyladenosine(37) in tRNA + diphosphate. Catalyzes the transfer of a dimethylallyl group onto the adenine at position 37 in tRNAs that read codons beginning with uridine, leading to the formation of N6-(dimethylallyl)adenosine (i(6)A). The chain is tRNA dimethylallyltransferase from Mycolicibacterium vanbaalenii (strain DSM 7251 / JCM 13017 / BCRC 16820 / KCTC 9966 / NRRL B-24157 / PYR-1) (Mycobacterium vanbaalenii).